The following is a 162-amino-acid chain: Transcriptional regulator MraZ (162 aa).

SpoVT-AbrB domains follow at residues 11–62 and 98–141; these read EHPS…GLSV and AVEC…SRDT.

It belongs to the MraZ family. Forms oligomers.

The protein resides in the cytoplasm. The protein localises to the nucleoid. This Pelobacter propionicus (strain DSM 2379 / NBRC 103807 / OttBd1) protein is Transcriptional regulator MraZ.